Consider the following 225-residue polypeptide: UPF0758 protein Shew185_0376 (225 aa).

The MPN domain occupies 102–224 (VLTNPDLTRD…IVSFAERGWI (123 aa)). Residues H173, H175, and D186 each coordinate Zn(2+). Positions 173–186 (HNHPSGNAEPSQAD) match the JAMM motif motif.

Belongs to the UPF0758 family.

This Shewanella baltica (strain OS185) protein is UPF0758 protein Shew185_0376.